Reading from the N-terminus, the 83-residue chain is Small ribosomal subunit protein bS20 (83 aa).

The segment at 1–25 (MPNIKSAIKRVNTTHTAEERNISQK) is disordered. Residues 16 to 25 (TAEERNISQK) show a composition bias toward basic and acidic residues.

The protein belongs to the bacterial ribosomal protein bS20 family.

Its function is as follows. Binds directly to 16S ribosomal RNA. This chain is Small ribosomal subunit protein bS20, found in Staphylococcus saprophyticus subsp. saprophyticus (strain ATCC 15305 / DSM 20229 / NCIMB 8711 / NCTC 7292 / S-41).